Reading from the N-terminus, the 155-residue chain is Large ribosomal subunit protein uL16 (155 aa).

It belongs to the universal ribosomal protein uL16 family. As to quaternary structure, part of the 50S ribosomal subunit.

Binds 23S rRNA and is also seen to make contacts with the A and possibly P site tRNAs. The protein is Large ribosomal subunit protein uL16 of Synechococcus sp. (strain CC9311).